The sequence spans 833 residues: Bifunctional dethiobiotin synthetase/7,8-diamino-pelargonic acid aminotransferase, mitochondrial (833 aa).

The transit peptide at 1–23 (MIPVTATLIRHRLRHLRHRIRFK) directs the protein to the mitochondrion. The interval 36-299 (HPTYLIWSAN…VLVLPPVPKD (264 aa)) is dethiobiotin synthetase. ATP is bound at residue 47–52 (SLGKTL). Residue T51 participates in Mg(2+) binding. T81 contacts substrate. A Mg(2+)-binding site is contributed by D88. ATP-binding positions include D97, 210-213 (ETAG), and 270-271 (ED). Residue E210 participates in Mg(2+) binding. Positions 332 to 830 (RLNGMAKLAG…TKLYKRLGEF (499 aa)) are 7,8-diamino-pelargonic acid aminotransferase. 391 to 392 (WW) lines the (8S)-8-amino-7-oxononanoate pocket. Position 453–454 (453–454 (GS)) interacts with pyridoxal 5'-phosphate. Y495 serves as a coordination point for (8S)-8-amino-7-oxononanoate. Residues 518-520 (PWY) and E545 contribute to the ATP site. A pyridoxal 5'-phosphate-binding site is contributed by D637. (8S)-8-amino-7-oxononanoate-binding residues include K666 and G700. At K666 the chain carries N6-(pyridoxal phosphate)lysine. A pyridoxal 5'-phosphate-binding site is contributed by 701 to 702 (HS). Residue R797 coordinates (8S)-8-amino-7-oxononanoate.

The protein in the N-terminal section; belongs to the dethiobiotin synthetase family. In the C-terminal section; belongs to the class-III pyridoxal-phosphate-dependent aminotransferase family. BioA subfamily. Homodimer. The cofactor is Mg(2+). It depends on pyridoxal 5'-phosphate as a cofactor.

It is found in the mitochondrion matrix. The enzyme catalyses (7R,8S)-7,8-diammoniononanoate + CO2 + ATP = (4R,5S)-dethiobiotin + ADP + phosphate + 3 H(+). It carries out the reaction (8S)-8-amino-7-oxononanoate + S-adenosyl-L-methionine = S-adenosyl-4-methylsulfanyl-2-oxobutanoate + (7R,8S)-7,8-diammoniononanoate. Its pathway is cofactor biosynthesis; biotin biosynthesis; biotin from 7,8-diaminononanoate: step 1/2. The protein operates within cofactor biosynthesis; biotin biosynthesis; 7,8-diaminononanoate from 8-amino-7-oxononanoate (SAM route): step 1/1. Bifunctional enzyme that catalyzes two different reactions involved in the biotin biosynthesis. In terms of biological role, catalyzes a mechanistically unusual reaction, the ATP-dependent insertion of CO2 between the N7 and N8 nitrogen atoms of 7,8-diaminopelargonic acid (DAPA) to form an ureido ring. Its function is as follows. Catalyzes the transfer of the alpha-amino group from S-adenosyl-L-methionine (SAM) to 7-keto-8-aminopelargonic acid (KAPA) to form 7,8-diaminopelargonic acid (DAPA). It is the only aminotransferase known to utilize SAM as an amino donor. This chain is Bifunctional dethiobiotin synthetase/7,8-diamino-pelargonic acid aminotransferase, mitochondrial, found in Arabidopsis thaliana (Mouse-ear cress).